The chain runs to 192 residues: Large ribosomal subunit protein bL9 (192 aa).

The interval 172-192 (DALRPEDFFDPEADGVDEDEA) is disordered. A compositionally biased stretch (acidic residues) spans 179–192 (FFDPEADGVDEDEA).

It belongs to the bacterial ribosomal protein bL9 family.

Binds to the 23S rRNA. The polypeptide is Large ribosomal subunit protein bL9 (Rhizobium leguminosarum bv. trifolii (strain WSM2304)).